A 78-amino-acid chain; its full sequence is MSRVCQVTGKGPVTGNNISHANNKTRRRFLPNLQHHRFWVESEKRFVRLRVSAKGMRIIDKRGIDVVLAELRARGEKV.

The disordered stretch occupies residues Met-1 to His-20.

The protein belongs to the bacterial ribosomal protein bL28 family.

The sequence is that of Large ribosomal subunit protein bL28 from Azotobacter vinelandii (strain DJ / ATCC BAA-1303).